Here is a 175-residue protein sequence, read N- to C-terminus: Large ribosomal subunit protein uL10 (175 aa).

The protein belongs to the universal ribosomal protein uL10 family. Part of the ribosomal stalk of the 50S ribosomal subunit. The N-terminus interacts with L11 and the large rRNA to form the base of the stalk. The C-terminus forms an elongated spine to which L12 dimers bind in a sequential fashion forming a multimeric L10(L12)X complex.

Functionally, forms part of the ribosomal stalk, playing a central role in the interaction of the ribosome with GTP-bound translation factors. The polypeptide is Large ribosomal subunit protein uL10 (Prochlorococcus marinus (strain MIT 9515)).